Here is a 70-residue protein sequence, read N- to C-terminus: Cold shock-like protein CspF (70 aa).

In terms of domain architecture, CSD spans 7–67 (GIVKTFDGKS…GLRGPSAANV (61 aa)).

It is found in the cytoplasm. The sequence is that of Cold shock-like protein CspF (cspF) from Escherichia coli (strain K12).